Here is a 680-residue protein sequence, read N- to C-terminus: Lipase 1 (680 aa).

Positions 1–34 are cleaved as a signal peptide; the sequence is MKSQNKYSIRKFSVGASSILIATLLFLSGGQAQA. Residues 35–290 constitute a propeptide that is removed on maturation; sequence AEKQVNMGNS…AKAKGDQTNK (256 aa). Disordered regions lie at residues 39–58 and 82–260; these read VNMGNSQEDTVTAQSIGDQQ and KNLH…KNGL. The segment covering 40 to 58 has biased composition (polar residues); that stretch reads NMGNSQEDTVTAQSIGDQQ. Over residues 84–112 the composition is skewed to basic and acidic residues; the sequence is LHNDKTISEENHRKTDDLNKDQLKDDKKS. 2 stretches are compositionally biased toward polar residues: residues 162 to 193 and 204 to 223; these read SQDLNANNNLPSQSRTKVSPSLNKSDQTSQRE and QPQQKNQANDKITDHNFNNE. The span at 224–234 shows a compositional bias: basic and acidic residues; that stretch reads QEVKPQKDEKT. The segment covering 235–246 has biased composition (polar residues); the sequence is LSVSDLKNNQKS. The Nucleophile role is filled by serine 408. The active-site Charge relay system is aspartate 600. Aspartate 638 serves as a coordination point for Ca(2+). Histidine 639 functions as the Charge relay system in the catalytic mechanism. Ca(2+) contacts are provided by aspartate 641, aspartate 646, and aspartate 649.

Belongs to the AB hydrolase superfamily. Lipase family.

The protein resides in the secreted. It catalyses the reaction a triacylglycerol + H2O = a diacylglycerol + a fatty acid + H(+). The chain is Lipase 1 (lip1) from Staphylococcus aureus (strain MRSA252).